Here is a 525-residue protein sequence, read N- to C-terminus: Peptide chain release factor 3 (525 aa).

One can recognise a tr-type G domain in the interval 8 to 276; sequence AMRRTFAIIS…AFVKEAPPPQ (269 aa). GTP contacts are provided by residues 17 to 24, 85 to 89, and 139 to 142; these read SHPDAGKT, DTPGH, and NKMD.

This sequence belongs to the TRAFAC class translation factor GTPase superfamily. Classic translation factor GTPase family. PrfC subfamily.

Its subcellular location is the cytoplasm. Increases the formation of ribosomal termination complexes and stimulates activities of RF-1 and RF-2. It binds guanine nucleotides and has strong preference for UGA stop codons. It may interact directly with the ribosome. The stimulation of RF-1 and RF-2 is significantly reduced by GTP and GDP, but not by GMP. The sequence is that of Peptide chain release factor 3 from Coxiella burnetii (strain CbuK_Q154) (Coxiella burnetii (strain Q154)).